Consider the following 108-residue polypeptide: Class I hydrophobin 3 (108 aa).

The first 17 residues, 1 to 17 (MFFQTTIVAALAFLAVA), serve as a signal peptide directing secretion. 4 cysteine pairs are disulfide-bonded: Cys-28-Cys-87, Cys-35-Cys-81, Cys-36-Cys-69, and Cys-88-Cys-101. N-linked (GlcNAc...) asparagine glycosylation occurs at Asn-37.

It belongs to the fungal hydrophobin family. In terms of assembly, self-assembles to form functional amyloid fibrils called rodlets. Self-assembly into fibrillar rodlets occurs spontaneously at hydrophobic:hydrophilic interfaces and the rodlets further associate laterally to form amphipathic monolayers.

The protein localises to the secreted. Its subcellular location is the cell wall. Its function is as follows. Aerial growth, conidiation, and dispersal of filamentous fungi in the environment rely upon a capability of their secreting small amphipathic proteins called hydrophobins (HPBs) with low sequence identity. Class I can self-assemble into an outermost layer of rodlet bundles on aerial cell surfaces, conferring cellular hydrophobicity that supports fungal growth, development and dispersal; whereas Class II form highly ordered films at water-air interfaces through intermolecular interactions but contribute nothing to the rodlet structure. Vmh3 is a class I hydrophobin that is essential for the maintenance of the surface hydrophobicity of the mycelium and might be involved in the development of fruiting bodies. Plays an important role in hyphal resistance against environmental stress. Necessary for the efficient biodegradation of lignin. The protein is Class I hydrophobin 3 of Pleurotus ostreatus (Oyster mushroom).